The following is a 99-amino-acid chain: Aspartyl/glutamyl-tRNA(Asn/Gln) amidotransferase subunit C (99 aa).

It belongs to the GatC family. In terms of assembly, heterotrimer of A, B and C subunits.

It catalyses the reaction L-glutamyl-tRNA(Gln) + L-glutamine + ATP + H2O = L-glutaminyl-tRNA(Gln) + L-glutamate + ADP + phosphate + H(+). The enzyme catalyses L-aspartyl-tRNA(Asn) + L-glutamine + ATP + H2O = L-asparaginyl-tRNA(Asn) + L-glutamate + ADP + phosphate + 2 H(+). Allows the formation of correctly charged Asn-tRNA(Asn) or Gln-tRNA(Gln) through the transamidation of misacylated Asp-tRNA(Asn) or Glu-tRNA(Gln) in organisms which lack either or both of asparaginyl-tRNA or glutaminyl-tRNA synthetases. The reaction takes place in the presence of glutamine and ATP through an activated phospho-Asp-tRNA(Asn) or phospho-Glu-tRNA(Gln). This chain is Aspartyl/glutamyl-tRNA(Asn/Gln) amidotransferase subunit C, found in Mycobacterium leprae (strain Br4923).